The sequence spans 86 residues: MKNLISELLLRLAQKEEESKELVAQVEALEIIVTAMLRNMAQNEQQKLIHQVEDALDGVKPDASVPDYDTELLRQYVKKLLRHPRS.

Residues 1 to 36 adopt a coiled-coil conformation; that stretch reads MKNLISELLLRLAQKEEESKELVAQVEALEIIVTAM.

It belongs to the IraP family. As to quaternary structure, interacts with RssB.

Its subcellular location is the cytoplasm. In terms of biological role, inhibits RpoS proteolysis by regulating RssB activity, thereby increasing the stability of the sigma stress factor RpoS especially during phosphate starvation, but also in stationary phase and during nitrogen starvation. Its effect on RpoS stability is due to its interaction with RssB, which probably blocks the interaction of RssB with RpoS, and the consequent delivery of the RssB-RpoS complex to the ClpXP protein degradation pathway. The polypeptide is Anti-adapter protein IraP (Citrobacter koseri (strain ATCC BAA-895 / CDC 4225-83 / SGSC4696)).